We begin with the raw amino-acid sequence, 501 residues long: TGF-beta receptor type-1 (501 aa).

An N-terminal signal peptide occupies residues 1-29; it reads MEAASAALRRCLLLIVLVAAATLLPGAKA. The Extracellular portion of the chain corresponds to 30-124; it reads LQCFCHLCTK…QSAGLGPVEL (95 aa). Disulfide bonds link Cys32/Cys50, Cys34/Cys37, Cys44/Cys67, Cys82/Cys94, and Cys95/Cys100. Asn41 is a glycosylation site (N-linked (GlcNAc...) asparagine). Residues 125–145 traverse the membrane as a helical segment; it reads AAVIAGPVCFVCIALMLMVYI. Over 146–501 the chain is Cytoplasmic; sequence CHNRTVIHHR…QLSQQEGIKM (356 aa). Ser163 is subject to Phosphoserine. The 30-residue stretch at 173–202 folds into the GS domain; it reads TTLKDLIYDMTTSGSGSGLPLLVQRTIART. Residues Thr183 and Thr184 each carry the phosphothreonine; by TGFBR2 modification. Phosphoserine; by TGFBR2 is present on residues Ser185, Ser187, and Ser189. The short motif at 191 to 192 is the FKBP1A-binding element; it reads LP. The region spanning 203 to 493 is the Protein kinase domain; sequence IVLQESIGKG…LRIKKTLSQL (291 aa). ATP contacts are provided by residues 209–217 and Lys230; that span reads IGKGRFGEV. Asp331 (proton acceptor) is an active-site residue. A Glycyl lysine isopeptide (Lys-Gly) (interchain with G-Cter in SUMO) cross-link involves residue Lys389.

This sequence belongs to the protein kinase superfamily. TKL Ser/Thr protein kinase family. TGFB receptor subfamily. In terms of assembly, homodimer; in the endoplasmic reticulum but also at the cell membrane. Heterohexamer; TGFB1, TGFB2 and TGFB3 homodimeric ligands assemble a functional receptor composed of two TGFBR1 and TGFBR2 heterodimers to form a ligand-receptor heterohexamer. The respective affinity of TGBRB1 and TGFBR2 for the ligands may modulate the kinetics of assembly of the receptor and may explain the different biological activities of TGFB1, TGFB2 and TGFB3. Component of a complex composed of TSC22D1 (via N-terminus), TGFBR1 and TGFBR2; the interaction between TSC22D1 and TGFBR1 is inhibited by SMAD7 and promoted by TGFB1. Interacts with CD109; inhibits TGF-beta receptor activation in keratinocytes. Interacts with RBPMS. Interacts with SMAD2, SMAD3 and ZFYVE9; ZFYVE9 recruits SMAD2 and SMAD3 to the TGF-beta receptor. Interacts with TRAF6 and MAP3K7; induces MAP3K7 activation by TRAF6. Interacts with PARD6A; involved in TGF-beta induced epithelial to mesenchymal transition. Interacts with NEDD4L. Interacts with SMAD7, SMURF1 and SMURF2; SMAD7 recruits NEDD4L, SMURF1 and SMURF2 to the TGF-beta receptor. Interacts with USP15 and VPS39. Interacts (unphosphorylated) with FKBP1A; prevents TGFBR1 phosphorylation by TGFBR2 and stabilizes it in the inactive conformation. Interacts with SDCBP (via C-terminus). Interacts with CAV1 and this interaction is impaired in the presence of SDCBP. Interacts with APPL1; interaction is TGF beta dependent; mediates trafficking of the TGFBR1 from the endosomes to the nucleus via microtubules in a TRAF6-dependent manner. Interacts with GPR50; this interaction promotes the constitutive activation of SMAD signaling pathway. Requires Mg(2+) as cofactor. The cofactor is Mn(2+). Phosphorylated at basal levels in the absence of ligand. Activated upon phosphorylation by TGFBR2, mainly in the GS domain. Phosphorylation in the GS domain abrogates FKBP1A-binding. Post-translationally, N-Glycosylated. In terms of processing, ubiquitinated; undergoes ubiquitination catalyzed by several E3 ubiquitin ligases including SMURF1, SMURF2 and NEDD4L2. Results in the proteasomal and/or lysosomal degradation of the receptor thereby negatively regulating its activity. Deubiquitinated by USP15, leading to stabilization of the protein and enhanced TGF-beta signal. Its ubiquitination and proteasome-mediated degradation is negatively regulated by SDCBP. As to expression, urogenital ridge, testis, ovary, brain and lungs.

The protein resides in the cell membrane. The protein localises to the cell junction. It is found in the tight junction. It localises to the membrane raft. Its subcellular location is the cell surface. It carries out the reaction L-threonyl-[receptor-protein] + ATP = O-phospho-L-threonyl-[receptor-protein] + ADP + H(+). The enzyme catalyses L-seryl-[receptor-protein] + ATP = O-phospho-L-seryl-[receptor-protein] + ADP + H(+). Its activity is regulated as follows. Kept in an inactive conformation by FKBP1A preventing receptor activation in absence of ligand. CD109 is another inhibitor of the receptor. Transmembrane serine/threonine kinase forming with the TGF-beta type II serine/threonine kinase receptor, TGFBR2, the non-promiscuous receptor for the TGF-beta cytokines TGFB1, TGFB2 and TGFB3. Transduces the TGFB1, TGFB2 and TGFB3 signal from the cell surface to the cytoplasm and is thus regulating a plethora of physiological and pathological processes including cell cycle arrest in epithelial and hematopoietic cells, control of mesenchymal cell proliferation and differentiation, wound healing, extracellular matrix production, immunosuppression and carcinogenesis. The formation of the receptor complex composed of 2 TGFBR1 and 2 TGFBR2 molecules symmetrically bound to the cytokine dimer results in the phosphorylation and the activation of TGFBR1 by the constitutively active TGFBR2. Activated TGFBR1 phosphorylates SMAD2 which dissociates from the receptor and interacts with SMAD4. The SMAD2-SMAD4 complex is subsequently translocated to the nucleus where it modulates the transcription of the TGF-beta-regulated genes. This constitutes the canonical SMAD-dependent TGF-beta signaling cascade. Also involved in non-canonical, SMAD-independent TGF-beta signaling pathways. For instance, TGFBR1 induces TRAF6 autoubiquitination which in turn results in MAP3K7 ubiquitination and activation to trigger apoptosis. Also regulates epithelial to mesenchymal transition through a SMAD-independent signaling pathway through PARD6A phosphorylation and activation. This is TGF-beta receptor type-1 (Tgfbr1) from Rattus norvegicus (Rat).